The sequence spans 333 residues: Adenosine deaminase (333 aa).

2 residues coordinate Zn(2+): H12 and H14. The substrate site is built by H14, D16, and G170. Zn(2+) is bound at residue H197. E200 functions as the Proton donor in the catalytic mechanism. Residue D278 coordinates Zn(2+). Substrate is bound at residue D279.

The protein belongs to the metallo-dependent hydrolases superfamily. Adenosine and AMP deaminases family. Adenosine deaminase subfamily. Zn(2+) is required as a cofactor.

It catalyses the reaction adenosine + H2O + H(+) = inosine + NH4(+). It carries out the reaction 2'-deoxyadenosine + H2O + H(+) = 2'-deoxyinosine + NH4(+). Functionally, catalyzes the hydrolytic deamination of adenosine and 2-deoxyadenosine. This chain is Adenosine deaminase, found in Salmonella enteritidis PT4 (strain P125109).